Consider the following 223-residue polypeptide: Probable Ras-related protein Rab-4A (223 aa).

16 to 23 (GNAGTGKT) contacts GTP. An Effector region motif is present at residues 38–46 (TQHTIGAEF). Residues 64-68 (DTAGQ) and 122-125 (NKKD) each bind GTP. 2 S-geranylgeranyl cysteine lipidation sites follow: Cys-221 and Cys-223. Cys-223 carries the post-translational modification Cysteine methyl ester.

The protein belongs to the small GTPase superfamily. Rab family.

The protein resides in the cell membrane. Protein transport. Probably involved in vesicular traffic. This is Probable Ras-related protein Rab-4A from Echinococcus multilocularis (Fox tapeworm).